A 680-amino-acid chain; its full sequence is Galactose oxidase (680 aa).

The N-terminal stretch at 1–24 is a signal peptide; the sequence is MKHLLTLALCFSSINAVAVTVPHK. Residues 25–41 constitute a propeptide that is removed on maturation; sequence AVGTGIPEGSLQFLSLR. One can recognise an F5/8 type C domain in the interval 42–189; sequence ASAPIGSAIS…SIAEINVFQA (148 aa). A disulfide bridge connects residues C59 and C68. Kelch repeat units follow at residues 223–268, 279–321, 323–372, 436–490, and 492–544; these read RVLM…HDMF, QIVV…TMSD, RVFT…LYRS, KILT…VLPD, and STFI…LLLP. A cross-link (3'-(S-cysteinyl)-tyrosine (Cys-Tyr)) is located at residues 269–313; the sequence is CPGISMDGNGQIVVTGGNDAKKTSLYDSSSDSWIPGPDMQVARGY. Y313 is a Cu cation binding site. Cu cation contacts are provided by Y536 and H537. Residue Y536 is the Proton acceptor of the active site. The cysteines at positions 556 and 559 are disulfide-linked. Position 622 (H622) interacts with Cu cation.

As to quaternary structure, monomer. Cu(2+) serves as cofactor. In terms of processing, galactose oxidase contains a protein-derived free radical cofactor. In the active state, Tyr-313, which is cross-linked to Cys-269 via a thioether bond, is oxidized to a radical and acts with Cu(2+) as a two-electron acceptor in the oxidation reaction. The cross-link is believed to modulate the redox potential of the tyrosyl radical, which is further stabilized by a stacking interaction with Trp-331 in the active site. The post-translational formation of the cross-link is closely linked to the propeptide cleavage event, and both are copper-dependent, autocatalytic processes. The propeptide may act as an intramolecular chaperone, facilitating thioester bond formation and copper binding by positioning of active-site residues, including copper ligands.

It localises to the secreted. The catalysed reaction is D-galactose + O2 = D-galacto-hexodialdose + H2O2. Inhibited by diethyldithiocarbamate. Catalyzes the sterospecific oxidation of primary alcohols to the corresponding aldehydes. The biologically relevant substrate of the enzyme is not known as the enzyme exhibits broad substrate specificity from small alcohols through sugars to oligo- and polysaccharides. This is Galactose oxidase (GAOA) from Gibberella zeae (Wheat head blight fungus).